Consider the following 215-residue polypeptide: MNIILMGLPGAGKGTQASEIVKKFPIPHISTGDMFRKAIKDETDLGKEAKSYMDRGELVPDEVTVGIVKERISEDDAKKGFLLDGFPRTIDQAESLSQIMSELDREIDAVINIEVPEEELMNRLTGRRICEKCGTTYHLVFNPPKVDGICDIDGGKLYQREDDNPETVSNRLSVNVKQSKPILEYYNNKGVLKNIDGSKDIDEVTNDVIDILDHL.

10–15 (GAGKGT) is a binding site for ATP. Residues 30-59 (STGDMFRKAIKDETDLGKEAKSYMDRGELV) form an NMP region. Residues T31, R36, 57-59 (ELV), 85-88 (GFPR), and Q92 each bind AMP. The segment at 126 to 163 (GRRICEKCGTTYHLVFNPPKVDGICDIDGGKLYQREDD) is LID. R127 contacts ATP. Residues C130 and C133 each coordinate Zn(2+). ATP is bound at residue 136–137 (TY). The Zn(2+) site is built by C150 and D153. AMP-binding residues include R160 and R171. ATP is bound at residue K199.

It belongs to the adenylate kinase family. As to quaternary structure, monomer.

Its subcellular location is the cytoplasm. The enzyme catalyses AMP + ATP = 2 ADP. The protein operates within purine metabolism; AMP biosynthesis via salvage pathway; AMP from ADP: step 1/1. Catalyzes the reversible transfer of the terminal phosphate group between ATP and AMP. Plays an important role in cellular energy homeostasis and in adenine nucleotide metabolism. This Staphylococcus epidermidis (strain ATCC 35984 / DSM 28319 / BCRC 17069 / CCUG 31568 / BM 3577 / RP62A) protein is Adenylate kinase.